Consider the following 911-residue polypeptide: Alpha-actinin-4 (911 aa).

Residues 1 to 30 are disordered; the sequence is MVDYHAASQSYQYGPSSAGNGAGGGGSMGD. The actin-binding stretch occupies residues 1–269; the sequence is MVDYHAASQS…YVSSFYHAFS (269 aa). The tract at residues 12–26 is interaction with VCL; sequence QYGPSSAGNGAGGGG. Tyr-31 bears the Phosphotyrosine mark. The interval 40–61 is interaction with VCL; it reads RDLLLDPAWEKQQRKTFTAWCN. Calponin-homology (CH) domains follow at residues 50–154 and 163–269; these read KQQR…LRFA and TSAK…HAFS. Positions 84–88 match the LXXLL motif motif; that stretch reads LMLLL. Positions 108-126 are interaction with VCL; sequence KINNVNKALDFIASKGVKL. The residue at position 114 (Lys-114) is an N6-acetyllysine. Residues 177 to 192 are polyphosphoinositide (PIP2)-binding; it reads TAPYKNVNVQNFHISW. At Lys-214 the chain carries N6-acetyllysine. Phosphothreonine is present on Thr-249. Spectrin repeat units lie at residues 293–403, 413–518, 528–639, and 649–752; these read HLME…WLLN, HLAE…ALEK, QLHL…ALLE, and HLRR…EVEN. 2 positions are modified to N6-acetyllysine: Lys-592 and Lys-625. Ser-696 is subject to Phosphoserine. Positions 736 to 911 are mediates interaction with MICALL2; the sequence is WEQLLTTIAR…STALYGESDL (176 aa). EF-hand domains follow at residues 765-800 and 806-841; these read EQMQ…LGYD and QGEA…ETTD. Asp-778 serves as a coordination point for Ca(2+). Lys-779 carries the N6-acetyllysine modification. Ca(2+) contacts are provided by Asp-780 and Glu-789. Lys-859 carries the N6-acetyllysine modification. Position 909 is a phosphoserine (Ser-909).

It belongs to the alpha-actinin family. As to quaternary structure, homodimer; antiparallel. Identified in a IGF2BP1-dependent mRNP granule complex containing untranslated mRNAs. Component of the CART complex, at least composed of ACTN4, HGS/HRS, MYO5B and TRIM3. Binds TRIM3 at the N-terminus. Interacts with MAGI1. Interacts with PDLIM2. Identified in a complex with CASK, IQGAP1, MAGI2, NPHS1, SPTAN1 and SPTBN1. Interacts with MICALL2 (preferentially in opened conformation); stimulated by RAB13 activation. Interacts with PPARG and RARA. Binds to VCL; this interaction triggers VCL conformational changes. Interacts with SEPTIN14. Interacts with IGSF8.

Its subcellular location is the nucleus. The protein resides in the cytoplasm. It is found in the cell junction. It localises to the cytoskeleton. The protein localises to the stress fiber. Its subcellular location is the perinuclear region. In terms of biological role, F-actin cross-linking protein which is thought to anchor actin to a variety of intracellular structures. This is a bundling protein. Probably involved in vesicular trafficking via its association with the CART complex. The CART complex is necessary for efficient transferrin receptor recycling but not for EGFR degradation. Involved in tight junction assembly in epithelial cells probably through interaction with MICALL2. Links MICALL2 to the actin cytoskeleton and recruits it to the tight junctions. May also function as a transcriptional coactivator, stimulating transcription mediated by the nuclear hormone receptors PPARG and RARA. Association with IGSF8 regulates the immune synapse formation and is required for efficient T-cell activation. This is Alpha-actinin-4 from Pongo abelii (Sumatran orangutan).